A 727-amino-acid polypeptide reads, in one-letter code: Synaptic vesicle glycoprotein 2C (727 aa).

The tract at residues 1 to 57 is interaction with SYT1; sequence MEDSYKDRTSLMKGAKDIAREVKKQTVKKVNQAVDRAQDEYTQRSYSRFQDEEDDDD. The Cytoplasmic portion of the chain corresponds to 1-154; it reads MEDSYKDRTS…CGHGRFQWAL (154 aa). 2 disordered regions span residues 24 to 84 and 109 to 128; these read KQTV…GHDE and VGQPKGDEYKDRRELESERR. Residues serine 75 and serine 76 each carry the phosphoserine modification. Phosphothreonine is present on threonine 79. The span at 113–128 shows a compositional bias: basic and acidic residues; the sequence is KGDEYKDRRELESERR. The helical transmembrane segment at 155–175 threads the bilayer; the sequence is FFVLGMALMADGVEVFVVGFV. At 176–191 the chain is on the extracellular side; the sequence is LPSAETDLCIPNSGSG. Residues 192-212 form a helical membrane-spanning segment; it reads WLGSIVYLGMMVGAFFWGGLA. The Cytoplasmic portion of the chain corresponds to 213–226; it reads DKVGRKQSLLICMS. The chain crosses the membrane as a helical span at residues 227–247; it reads VNGFFAFLSSFVQGYGFFLFC. Residue arginine 248 is a topological domain, extracellular. The helical transmembrane segment at 249 to 269 threads the bilayer; the sequence is LLSGFGIGGAIPTVFSYFAEV. Residues 270-280 lie on the Cytoplasmic side of the membrane; that stretch reads LAREKRGEHLS. Residues 281–301 traverse the membrane as a helical segment; that stretch reads WLCMFWMIGGIYASAMAWAII. The Extracellular portion of the chain corresponds to 302–320; it reads PHYGWSFSMGSAYQFHSWR. The chain crosses the membrane as a helical span at residues 321-341; sequence VFVIVCALPCVSSVVALTFMP. The Cytoplasmic portion of the chain corresponds to 342–437; sequence ESPRFLLEVG…PVRDNTIKLT (96 aa). Residues 438-458 form a helical membrane-spanning segment; it reads IVWFTLSFGYYGLSVWFPDVI. At 459 to 578 the chain is on the extracellular side; the sequence is KPLQSDEYAL…CQITFDDDYS (120 aa). The residue at position 466 (tyrosine 466) is a Phosphotyrosine. N-linked (GlcNAc...) asparagine glycans are attached at residues asparagine 480, asparagine 484, asparagine 534, asparagine 559, and asparagine 565. Residues 519–563 form a (Microbial infection) C.botulinum neurotoxin type A-binding region; it reads SCTFEDVTSVNTYFKNCTFIDTVFDNTDFEPYKFIDSEFKNCSFF. The helical transmembrane segment at 579–599 threads the bilayer; that stretch reads AYWIYFVNFLGTLAVLPGNIV. The Cytoplasmic portion of the chain corresponds to 600-609; sequence SALLMDRIGR. Residues 610–630 form a helical membrane-spanning segment; the sequence is LTMLGGSMVLSGISCFFLWFG. Over 631 to 636 the chain is Extracellular; it reads TSESMM. Residues 637-657 traverse the membrane as a helical segment; the sequence is IGMLCLYNGLTISAWNSLDVV. Topologically, residues 658–669 are cytoplasmic; the sequence is TVELYPTDRRAT. The helical transmembrane segment at 670–690 threads the bilayer; the sequence is GFGFLNALCKAAAVLGNLIFG. At 691-698 the chain is on the extracellular side; it reads SLVSITKS. The helical transmembrane segment at 699-719 threads the bilayer; sequence IPILLASTVLVCGGLVGLCLP. The Cytoplasmic portion of the chain corresponds to 720–727; sequence DTRTQVLM.

This sequence belongs to the major facilitator superfamily. As to quaternary structure, interacts with SYT1 in a calcium-dependent manner. (Microbial infection) Interacts with C.botulinum neurotoxin type A1 and type A2 (BoNT/A, botA). Interaction is improved by glycosylation of SV2. N-glycosylated. Upon expression in a kidney cell line the most abundant glycan on Asn-534 is GlcNAc(3)Hex(5), while on Asn-559 and Asn-565 the most abundant glycan is GlcNAc2Fuc1Man3GlcNAc3Gal3. Both Asn-559 and Asn-565 have a high degree of glycan heterogeneity.

It is found in the cytoplasmic vesicle. Its subcellular location is the secretory vesicle. It localises to the synaptic vesicle membrane. In terms of biological role, plays a role in the control of regulated secretion in neural and endocrine cells, enhancing selectively low-frequency neurotransmission. Positively regulates vesicle fusion by maintaining the readily releasable pool of secretory vesicles. (Microbial infection) Receptor for C.botulinum neurotoxin type A (BoNT/A, botA); the toxin probably binds via extracellular loop 4. Recognition by BoNT/A relies on both protein-protein and protein-N-glycosylation; glycosylation of Asn-559 increases its affinity for BoNT/A. Also serves as a receptor for the closely related C.botulinum neurotoxin type A2; glycosylation is not essential but enhances the interaction. Its function is as follows. (Microbial infection) Possible receptor for C.botulinum neurotoxin type D (BoNT/D, botD); note that type D does not usually infect humans. The sequence is that of Synaptic vesicle glycoprotein 2C (SV2C) from Homo sapiens (Human).